The primary structure comprises 154 residues: Transcription antitermination protein NusB (154 aa).

It belongs to the NusB family.

In terms of biological role, involved in transcription antitermination. Required for transcription of ribosomal RNA (rRNA) genes. Binds specifically to the boxA antiterminator sequence of the ribosomal RNA (rrn) operons. In Bordetella parapertussis (strain 12822 / ATCC BAA-587 / NCTC 13253), this protein is Transcription antitermination protein NusB.